Here is a 208-residue protein sequence, read N- to C-terminus: Ribosomal RNA small subunit methyltransferase G (208 aa).

Residues glycine 76, leucine 81, 127–128 (VE), and arginine 142 contribute to the S-adenosyl-L-methionine site.

Belongs to the methyltransferase superfamily. RNA methyltransferase RsmG family.

The protein resides in the cytoplasm. It catalyses the reaction guanosine(527) in 16S rRNA + S-adenosyl-L-methionine = N(7)-methylguanosine(527) in 16S rRNA + S-adenosyl-L-homocysteine. Its function is as follows. Specifically methylates the N7 position of guanine in position 527 of 16S rRNA. This is Ribosomal RNA small subunit methyltransferase G from Legionella pneumophila (strain Lens).